The sequence spans 138 residues: MPTINQLIRKGRVSKVENSKSPALNKGYNSFKKEHTNVSSPQKRGVCTRVGTMTPKKPNSALRKYARVRLTNGIEVTAYIPGIGHNLQEHSVVLIRGGRVKDLPGVRYHIVRGALDTAGVENRAQGRSKYGTKKPKAK.

The tract at residues 33-55 (KEHTNVSSPQKRGVCTRVGTMTP) is disordered.

Belongs to the universal ribosomal protein uS12 family. Part of the 30S ribosomal subunit. Contacts proteins S8 and S17. May interact with IF1 in the 30S initiation complex. Interacts with BrxC.

With S4 and S5 plays an important role in translational accuracy. Its function is as follows. Interacts with and stabilizes bases of the 16S rRNA that are involved in tRNA selection in the A site and with the mRNA backbone. Located at the interface of the 30S and 50S subunits, it traverses the body of the 30S subunit contacting proteins on the other side and probably holding the rRNA structure together. The combined cluster of proteins S8, S12 and S17 appears to hold together the shoulder and platform of the 30S subunit. In Bacillus subtilis (strain 168), this protein is Small ribosomal subunit protein uS12 (rpsL).